The sequence spans 1163 residues: Hamartin (1163 aa).

Lys30 is covalently cross-linked (Glycyl lysine isopeptide (Lys-Gly) (interchain with G-Cter in ubiquitin)). Over residues 295-316 (SSYVDTQNSYGGATSTPSSTSR) the composition is skewed to polar residues. Disordered stretches follow at residues 295 to 337 (SSYV…STRP) and 353 to 594 (CGMT…QRGV). Over residues 321-337 (STPGQLPQSLSSLSTRP) the composition is skewed to low complexity. Residues 393–402 (TSPPPAPPCP) show a composition bias toward pro residues. The tract at residues 403-787 (QDDCAHGPAS…QIRQLQHDRE (385 aa)) is mediates interaction with WDR45B. A compositionally biased stretch (basic and acidic residues) spans 474-487 (EKDKEEAAISKELS). Phosphoserine occurs at positions 487, 505, 511, 521, 595, and 598. Positions 512 to 530 (LSGSQRKTHSAASGTQGFS) are enriched in polar residues. Coiled-coil stretches lie at residues 721-919 (RKVI…LAKK) and 970-994 (EKDG…ERLD). The segment covering 1008–1020 (NEEAAGHNGETRT) has biased composition (basic and acidic residues). The tract at residues 1008 to 1163 (NEEAAGHNGE…DYNETHHEHS (156 aa)) is disordered. The span at 1029 to 1046 (SCGGRVTGGSSSSSSELS) shows a compositional bias: low complexity. The segment covering 1066–1083 (EPSSSIPTTVGSLPSSKS) has biased composition (polar residues). Residues 1088–1099 (KTRELFRNKSES) are compositionally biased toward basic and acidic residues. Ser1097 carries the post-translational modification Phosphoserine. Residues 1131–1146 (PPSLDAPHPSSPSSDS) show a composition bias toward low complexity. The span at 1154–1163 (DYNETHHEHS) shows a compositional bias: basic and acidic residues.

Component of the TSC-TBC complex (also named Rhebulator complex), composed of 2 molecules of TSC1, 2 molecules of TSC2 and 1 molecule of TBC1D7. Probably forms a complex composed of chaperones HSP90 and HSP70, co-chaperones STIP1/HOP, CDC37, PPP5C, PTGES3/p23, TSC1 and client protein TSC2. Forms a complex composed of chaperones HSP90 and HSP70, co-chaperones CDC37, PPP5C, TSC1 and client protein TSC2, CDK4, AKT, RAF1 and NR3C1; this complex does not contain co-chaperones STIP1/HOP and PTGES3/p23. Forms a complex containing HSP90AA1, TSC1 and TSC2; TSC1 is required to recruit TCS2 to the complex. Interacts (via C-terminus) with the closed form of HSP90AA1 (via the middle domain and TPR repeat-binding motif). Interacts with DOCK7. Interacts with FBXW5. Interacts with WDR45B. Interacts with RPAP3 and URI1. Post-translationally, phosphorylation at Ser-505 does not affect interaction with TSC2. In terms of processing, 'Lys-63'-linked ubiquitinated at Lys-30 by PELI1; the ubiquitination promotes TSC1/TSC2 complex stability. In terms of tissue distribution, highly expressed in brain, spleen and kidney, followed by liver and heart.

It localises to the lysosome membrane. It is found in the cytoplasm. Its subcellular location is the cytosol. Non-catalytic component of the TSC-TBC complex, a multiprotein complex that acts as a negative regulator of the canonical mTORC1 complex, an evolutionarily conserved central nutrient sensor that stimulates anabolic reactions and macromolecule biosynthesis to promote cellular biomass generation and growth. The TSC-TBC complex acts as a GTPase-activating protein (GAP) for the small GTPase RHEB, a direct activator of the protein kinase activity of mTORC1. In absence of nutrients, the TSC-TBC complex inhibits mTORC1, thereby preventing phosphorylation of ribosomal protein S6 kinase (RPS6KB1 and RPS6KB2) and EIF4EBP1 (4E-BP1) by the mTORC1 signaling. The TSC-TBC complex is inactivated in response to nutrients, relieving inhibition of mTORC1. Within the TSC-TBC complex, TSC1 stabilizes TSC2 and prevents TSC2 self-aggregation. Involved in microtubule-mediated protein transport via its ability to regulate mTORC1 signaling. Also acts as a co-chaperone for HSP90AA1 facilitating HSP90AA1 chaperoning of protein clients such as kinases, TSC2 and glucocorticoid receptor NR3C1. Increases ATP binding to HSP90AA1 and inhibits HSP90AA1 ATPase activity. Competes with the activating co-chaperone AHSA1 for binding to HSP90AA1, thereby providing a reciprocal regulatory mechanism for chaperoning of client proteins. Recruits TSC2 to HSP90AA1 and stabilizes TSC2 by preventing the interaction between TSC2 and ubiquitin ligase HERC1. This chain is Hamartin, found in Rattus norvegicus (Rat).